Reading from the N-terminus, the 78-residue chain is Acyl carrier protein (78 aa).

In terms of domain architecture, Carrier spans 4-78 (AEIKDKVYDI…QQAIDYIVKK (75 aa)). Serine 39 carries the O-(pantetheine 4'-phosphoryl)serine modification.

This sequence belongs to the acyl carrier protein (ACP) family. Post-translationally, 4'-phosphopantetheine is transferred from CoA to a specific serine of apo-ACP by AcpS. This modification is essential for activity because fatty acids are bound in thioester linkage to the sulfhydryl of the prosthetic group.

Its subcellular location is the cytoplasm. Its pathway is lipid metabolism; fatty acid biosynthesis. Carrier of the growing fatty acid chain in fatty acid biosynthesis. The protein is Acyl carrier protein of Chlorobium phaeovibrioides (strain DSM 265 / 1930) (Prosthecochloris vibrioformis (strain DSM 265)).